A 167-amino-acid polypeptide reads, in one-letter code: Bacterial non-heme ferritin (167 aa).

The Ferritin-like diiron domain maps to 1 to 145 (MLSKDIIKLL…DILDKIELIG (145 aa)). Fe cation-binding residues include Glu17, Glu50, His53, Glu94, and Gln127.

It belongs to the ferritin family. Prokaryotic subfamily. In terms of assembly, homooligomer of 24 subunits that assemble into a spherical protein shell (12 +/- 1 nM diameter) that can sequester at least 2000 iron atoms.

It localises to the cytoplasm. It carries out the reaction 4 Fe(2+) + O2 + 6 H2O = 4 iron(III) oxide-hydroxide + 12 H(+). Functionally, iron-storage protein. This Helicobacter pylori (strain J99 / ATCC 700824) (Campylobacter pylori J99) protein is Bacterial non-heme ferritin (ftnA).